The sequence spans 945 residues: Glutamyl aminopeptidase (945 aa).

Over 1 to 18 (MNFAEEEPSKKYCIKGKH) the chain is Cytoplasmic. The chain crosses the membrane as a helical; Signal-anchor for type II membrane protein span at residues 19 to 39 (VAIICATVVAVGLIVGLSVGL). The Extracellular segment spans residues 40-945 (TRSCEPGTTP…SISEWFTSMP (906 aa)). Residues 45–77 (PGTTPAPSNPPPHTSTALPPQDQNVCPDSDDES) are disordered. N-linked (GlcNAc...) asparagine glycosylation is found at Asn-116 and Asn-189. Residue Glu-215 coordinates substrate. N-linked (GlcNAc...) asparagine glycosylation is found at Asn-236 and Asn-316. 349 to 353 (GAMEN) contributes to the substrate binding site. Residue His-385 participates in Zn(2+) binding. Glu-386 (proton acceptor) is an active-site residue. Positions 389 and 408 each coordinate Zn(2+). N-linked (GlcNAc...) asparagine glycans are attached at residues Asn-546, Asn-584, Asn-601, Asn-640, Asn-669, Asn-754, Asn-766, and Asn-792. Arg-878 is a substrate binding site.

It belongs to the peptidase M1 family. As to quaternary structure, homodimer; disulfide-linked. The cofactor is Zn(2+). Highest expression in kidney proximal tubules and ileum enterocytes. High expression also detected in liver and pituitary. Lower levels in heart, adrenal gland and brain. Not detected in aorta, lung or spleen. In heart, higher levels in ventricle than in atrium. Also expressed in glomerular mesangial cells.

Its subcellular location is the cell membrane. It catalyses the reaction Release of N-terminal glutamate (and to a lesser extent aspartate) from a peptide.. Its activity is regulated as follows. Substrate specificity is modulated by calcium which enhances the enzymatic activity for cleavage of acidic residues while reducing its activity with basic residues. Inhibited by aminopeptidase inhibitors amastatin and bestatin. Its function is as follows. Regulates central hypertension through its calcium-modulated preference to cleave N-terminal acidic residues from peptides such as angiotensin II. The protein is Glutamyl aminopeptidase (Enpep) of Rattus norvegicus (Rat).